A 546-amino-acid polypeptide reads, in one-letter code: DDB1- and CUL4-associated factor 11 (546 aa).

The segment covering 1–19 (MGSRNSSSAGSGSGDPSEG) has biased composition (low complexity). Positions 1-40 (MGSRNSSSAGSGSGDPSEGLPRRGAGLRRSEEEEEEDEDV) are disordered. Phosphoserine is present on residues Leu49 and Ser75. 7 WD repeats span residues 170-210 (SYSQ…RKFK), 216-258 (DVGW…TALD), 263-302 (ERRFAVFSIAVSSDGREVLGGANDGCLYVFDREQNRRTLQ), 305-345 (SHED…EDDP), 353-392 (GHQDGITFIDSKGDARYLISNSKDQTIKLWDIRRFSSREG), 435-480 (GVLH…KKLT), and 481-520 (NHKACVRDVSWHPFEEKIVSSSWDGNLRLWQYRQAEYFQD). The interval 523 to 546 (PESEECASAPAPVPQSSTPFSSPQ) is disordered. Positions 536–546 (PQSSTPFSSPQ) are enriched in polar residues.

Interacts with DDB1 and CUL4A.

It participates in protein modification; protein ubiquitination. Functionally, may function as a substrate receptor for CUL4-DDB1 E3 ubiquitin-protein ligase complex. The polypeptide is DDB1- and CUL4-associated factor 11 (DCAF11) (Homo sapiens (Human)).